Here is a 331-residue protein sequence, read N- to C-terminus: Low affinity immunoglobulin epsilon Fc receptor (331 aa).

The Cytoplasmic segment spans residues 1 to 23; sequence MEENEYSGYWEPPRKRCCCARRG. 2 S-palmitoyl cysteine lipidation sites follow: cysteine 17 and cysteine 18. The helical; Signal-anchor for type II membrane protein transmembrane segment at 24–49 threads the bilayer; it reads TQLMLVGLLSTAMWAGLLALLLLWHW. At 50–331 the chain is on the extracellular side; sequence ETEKNLKQLG…PTRPTPKSEP (282 aa). An N-linked (GlcNAc...) asparagine glycan is attached at asparagine 65. 3 repeats span residues 71-91, 92-112, and 113-133; these read KDLQ…VQMS, QNLQ…SRLS, and QNLT…SKLS. Asparagine 114 is a glycosylation site (N-linked (GlcNAc...) asparagine). 4 cysteine pairs are disulfide-bonded: cysteine 183-cysteine 311, cysteine 186-cysteine 197, cysteine 214-cysteine 305, and cysteine 282-cysteine 296. The C-type lectin domain maps to 185-298; that stretch reads ICPKNWLHFQ…GQWNDAFCRS (114 aa). Ca(2+) contacts are provided by glutamate 272, asparagine 292, and aspartate 293. Serine 319 carries an O-linked (Xyl...) (chondroitin sulfate) serine glycan.

In terms of assembly, homotrimer. Interacts (via C-type lectin domain) with IGHE (via CH3 region); this interaction regulates IgE homeostasis. Interacts (via C-terminus) with CR2/CD21 (via Sushi domain 1 and 2). In terms of processing, N- and O-glycosylated.

The protein resides in the cell membrane. It is found in the secreted. Low-affinity receptor for immunoglobulin E (IgE) and CR2/CD21. Has essential roles in the regulation of IgE production and in the differentiation of B cells. On B cells, initiates IgE-dependent antigen uptake and presentation to T cells. On macrophages, upon IgE binding and antigen cross-linking induces intracellular killing of parasites through activation of L-Arginine-nitric oxide pathway. This Mus musculus (Mouse) protein is Low affinity immunoglobulin epsilon Fc receptor (Fcer2).